A 429-amino-acid polypeptide reads, in one-letter code: C4-dicarboxylate transport protein (429 aa).

The next 8 helical transmembrane spans lie at V9–P29, L45–M65, L79–I99, G149–G169, V185–M205, L223–A243, I308–M328, and A356–I376.

The protein belongs to the dicarboxylate/amino acid:cation symporter (DAACS) (TC 2.A.23) family.

The protein resides in the cell inner membrane. Responsible for the transport of dicarboxylates such as succinate, fumarate, and malate from the periplasm across the membrane. In Burkholderia ambifaria (strain ATCC BAA-244 / DSM 16087 / CCUG 44356 / LMG 19182 / AMMD) (Burkholderia cepacia (strain AMMD)), this protein is C4-dicarboxylate transport protein.